The sequence spans 123 residues: Immunoglobulin lambda variable 5-37 (123 aa).

Residues methionine 1 to serine 19 form the signal peptide. The interval glutamine 20 to proline 44 is framework-1. Positions proline 21–serine 123 constitute an Ig-like domain. Cysteine 41 and cysteine 115 are disulfide-bonded. The interval serine 45–asparagine 53 is complementarity-determining-1. The interval isoleucine 54–tyrosine 70 is framework-2. The complementarity-determining-2 stretch occupies residues tyrosine 71–lysine 77. A framework-3 region spans residues glycine 78–cysteine 115. A complementarity-determining-3 region spans residues methionine 116–serine 123.

As to quaternary structure, immunoglobulins are composed of two identical heavy chains and two identical light chains; disulfide-linked.

It localises to the secreted. Its subcellular location is the cell membrane. V region of the variable domain of immunoglobulin light chains that participates in the antigen recognition. Immunoglobulins, also known as antibodies, are membrane-bound or secreted glycoproteins produced by B lymphocytes. In the recognition phase of humoral immunity, the membrane-bound immunoglobulins serve as receptors which, upon binding of a specific antigen, trigger the clonal expansion and differentiation of B lymphocytes into immunoglobulins-secreting plasma cells. Secreted immunoglobulins mediate the effector phase of humoral immunity, which results in the elimination of bound antigens. The antigen binding site is formed by the variable domain of one heavy chain, together with that of its associated light chain. Thus, each immunoglobulin has two antigen binding sites with remarkable affinity for a particular antigen. The variable domains are assembled by a process called V-(D)-J rearrangement and can then be subjected to somatic hypermutations which, after exposure to antigen and selection, allow affinity maturation for a particular antigen. In Homo sapiens (Human), this protein is Immunoglobulin lambda variable 5-37.